Reading from the N-terminus, the 447-residue chain is BAG family molecular chaperone regulator 5 (447 aa).

5 consecutive BAG domains span residues 9-86 (SISR…EQNA), 95-167 (QNIF…EDCM), 182-260 (SVAK…DLEE), 275-350 (SILK…DLKE), and 365-442 (SHKA…DLKS).

In terms of assembly, binds to the ATPase domain of HSP/HSP70 chaperones. Binds PRKN. Interacts with HSPA8 and JPH2. As to expression, expressed in the heart.

Its function is as follows. Co-chaperone for HSP/HSP70 proteins. It functions as a nucleotide-exchange factor promoting the release of ADP from HSP70, thereby activating HSP70-mediated protein refolding. Has an essential role in maintaining proteostasis at junctional membrane complexes (JMC), where it may function as a scaffold between the HSPA8 chaperone and JMC proteins enabling correct, HSPA8-dependent JMC protein folding. Inhibits both auto-ubiquitination of PRKN and ubiquitination of target proteins by PRKN. This Homo sapiens (Human) protein is BAG family molecular chaperone regulator 5 (BAG5).